A 210-amino-acid polypeptide reads, in one-letter code: Frataxin, mitochondrial (210 aa).

The transit peptide at 1-41 (MWTFGRRAVAGLLASPSPAQAQTLARAPRLAELAQLCSRRG) directs the protein to the mitochondrion.

This sequence belongs to the frataxin family. As to quaternary structure, component of the mitochondrial core iron-sulfur cluster (ISC) complex composed of NFS1, LYRM4, NDUFAB1, ISCU, FXN, and FDX2; this complex is a heterohexamer containing two copies of each monomer. Homodimer. Monomer (probable predominant form). Oligomer. Monomers and polymeric aggregates of &gt;1 MDa have been isolated from mitochondria. A small fraction of heterologous overexpressed recombinant frataxin forms high-molecular weight aggregates that incorporate iron. Interacts with LYRM4. Interacts (via ferrous form) with ISCU; the interaction is possible when both are bound to the dimeric form of the cysteine desulfurase complex (NFS1:LYRM4) and the interaction enhances FXN interaction to the dimeric form of the cysteine desulfurase complex (NFS1:LYRM4). Interacts with FECH; one iron-bound FXN monomer seems to interact with a FECH homodimer. Interacts with SDHA and SDHB. Interacts with ACO2; the interaction is dependent on citrate. Interacts with HSPA9. In terms of assembly, interacts with ACO1. Interacts with ISCU (cytoplasmic form). Processed in two steps by mitochondrial processing peptidase (MPP). MPP first cleaves the precursor to intermediate form and subsequently converts the intermediate to yield frataxin mature form (frataxin(81-210)) which is the predominant form. The additional forms, frataxin(56-210) and frataxin(78-210), seem to be produced when the normal maturation process is impaired; their physiological relevance is unsure.

It localises to the mitochondrion. The protein resides in the cytoplasm. The protein localises to the cytosol. It catalyses the reaction 4 Fe(2+) + O2 + 4 H(+) = 4 Fe(3+) + 2 H2O. Functions as an activator of persulfide transfer to the scaffoding protein ISCU as component of the core iron-sulfur cluster (ISC) assembly complex and participates to the [2Fe-2S] cluster assembly. Accelerates sulfur transfer from NFS1 persulfide intermediate to ISCU and to small thiols such as L-cysteine and glutathione leading to persulfuration of these thiols and ultimately sulfide release. Binds ferrous ion and is released from FXN upon the addition of both L-cysteine and reduced FDX2 during [2Fe-2S] cluster assembly. The core iron-sulfur cluster (ISC) assembly complex is involved in the de novo synthesis of a [2Fe-2S] cluster, the first step of the mitochondrial iron-sulfur protein biogenesis. This process is initiated by the cysteine desulfurase complex (NFS1:LYRM4:NDUFAB1) that produces persulfide which is delivered on the scaffold protein ISCU in a FXN-dependent manner. Then this complex is stabilized by FDX2 which provides reducing equivalents to accomplish the [2Fe-2S] cluster assembly. Finally, the [2Fe-2S] cluster is transferred from ISCU to chaperone proteins, including HSCB, HSPA9 and GLRX5. May play a role in the protection against iron-catalyzed oxidative stress through its ability to catalyze the oxidation of Fe(2+) to Fe(3+); the oligomeric form but not the monomeric form has in vitro ferroxidase activity. May be able to store large amounts of iron in the form of a ferrihydrite mineral by oligomerization; however, the physiological relevance is unsure as reports are conflicting and the function has only been shown using heterologous overexpression systems. May function as an iron chaperone protein that protects the aconitase [4Fe-4S]2+ cluster from disassembly and promotes enzyme reactivation. May play a role as a high affinity iron binding partner for FECH that is capable of both delivering iron to ferrochelatase and mediating the terminal step in mitochondrial heme biosynthesis. Its function is as follows. Modulates the RNA-binding activity of ACO1. May be involved in the cytoplasmic iron-sulfur protein biogenesis. May contribute to oxidative stress resistance and overall cell survival. The polypeptide is Frataxin, mitochondrial (Macaca fascicularis (Crab-eating macaque)).